Reading from the N-terminus, the 259-residue chain is Phosphatidylglycerol--prolipoprotein diacylglyceryl transferase (259 aa).

4 helical membrane-spanning segments follow: residues 16–36 (LAIS…WFYA), 55–75 (FITY…VLLY), 92–112 (EGGM…YLFC), and 117–137 (INFL…LFLG). R138 is an a 1,2-diacyl-sn-glycero-3-phospho-(1'-sn-glycerol) binding site. 3 consecutive transmembrane segments (helical) span residues 172–192 (QLYE…YATF), 201–221 (GLNS…IEIF), and 228–248 (IGFI…MLLL).

It belongs to the Lgt family.

It localises to the cell inner membrane. It carries out the reaction L-cysteinyl-[prolipoprotein] + a 1,2-diacyl-sn-glycero-3-phospho-(1'-sn-glycerol) = an S-1,2-diacyl-sn-glyceryl-L-cysteinyl-[prolipoprotein] + sn-glycerol 1-phosphate + H(+). Its pathway is protein modification; lipoprotein biosynthesis (diacylglyceryl transfer). Its function is as follows. Catalyzes the transfer of the diacylglyceryl group from phosphatidylglycerol to the sulfhydryl group of the N-terminal cysteine of a prolipoprotein, the first step in the formation of mature lipoproteins. This Rickettsia rickettsii (strain Iowa) protein is Phosphatidylglycerol--prolipoprotein diacylglyceryl transferase.